Reading from the N-terminus, the 466-residue chain is Ankyrin repeat and SOCS box protein 18 (466 aa).

6 ANK repeats span residues 119 to 148 (ELTT…DPDA), 151 to 180 (GGRG…DPDL), 184 to 213 (EGLA…SVQR), 218 to 247 (GRDT…HVDA), 251 to 288 (RGET…EADA), and 292 to 321 (DERS…DAGA). Residues 405–463 (QMHKPFYQSLFALALTPRCLQHLCRCALRRLFGKRCFDLIPLLPLPKPLQNYLLLEPQG) enclose the SOCS box domain.

Belongs to the ankyrin SOCS box (ASB) family.

The protein operates within protein modification; protein ubiquitination. Its function is as follows. May be a substrate-recognition component of a SCF-like ECS (Elongin-Cullin-SOCS-box protein) E3 ubiquitin-protein ligase complex which mediates the ubiquitination and subsequent proteasomal degradation of target proteins. The sequence is that of Ankyrin repeat and SOCS box protein 18 (ASB18) from Homo sapiens (Human).